The chain runs to 1400 residues: DNA-directed RNA polymerase subunit beta' (1400 aa).

The Zn(2+) site is built by Cys-71, Cys-73, Cys-86, and Cys-89. Residues Asp-462, Asp-464, and Asp-466 each coordinate Mg(2+). The Zn(2+) site is built by Cys-811, Cys-885, Cys-892, and Cys-895.

This sequence belongs to the RNA polymerase beta' chain family. In terms of assembly, the RNAP catalytic core consists of 2 alpha, 1 beta, 1 beta' and 1 omega subunit. When a sigma factor is associated with the core the holoenzyme is formed, which can initiate transcription. It depends on Mg(2+) as a cofactor. The cofactor is Zn(2+).

The catalysed reaction is RNA(n) + a ribonucleoside 5'-triphosphate = RNA(n+1) + diphosphate. Functionally, DNA-dependent RNA polymerase catalyzes the transcription of DNA into RNA using the four ribonucleoside triphosphates as substrates. The sequence is that of DNA-directed RNA polymerase subunit beta' from Brucella anthropi (strain ATCC 49188 / DSM 6882 / CCUG 24695 / JCM 21032 / LMG 3331 / NBRC 15819 / NCTC 12168 / Alc 37) (Ochrobactrum anthropi).